Reading from the N-terminus, the 334-residue chain is Fructose-1,6-bisphosphatase class 1 (334 aa).

Mg(2+) is bound by residues Glu87, Asp106, Leu108, and Asp109. Residues 109–112 (DGSS), Asn208, and Lys274 contribute to the substrate site. Mg(2+) is bound at residue Glu280.

Belongs to the FBPase class 1 family. Homotetramer. Mg(2+) is required as a cofactor.

Its subcellular location is the cytoplasm. The catalysed reaction is beta-D-fructose 1,6-bisphosphate + H2O = beta-D-fructose 6-phosphate + phosphate. It functions in the pathway carbohydrate biosynthesis; gluconeogenesis. The chain is Fructose-1,6-bisphosphatase class 1 from Psychrobacter sp. (strain PRwf-1).